The sequence spans 292 residues: D-tagatose-1,6-bisphosphate aldolase subunit KbaY (292 aa).

Catalysis depends on D82, which acts as the Proton donor. 2 residues coordinate Zn(2+): H83 and H180. G181 contributes to the dihydroxyacetone phosphate binding site. H208 is a binding site for Zn(2+). Residues 209–211 and 230–233 contribute to the dihydroxyacetone phosphate site; these read GAS and NVAT.

It belongs to the class II fructose-bisphosphate aldolase family. TagBP aldolase KbaY subfamily. As to quaternary structure, homotetramer. Forms a complex with KbaZ. It depends on Zn(2+) as a cofactor.

The catalysed reaction is D-tagatofuranose 1,6-bisphosphate = D-glyceraldehyde 3-phosphate + dihydroxyacetone phosphate. It participates in carbohydrate metabolism; D-tagatose 6-phosphate degradation; D-glyceraldehyde 3-phosphate and glycerone phosphate from D-tagatose 6-phosphate: step 2/2. Functionally, catalytic subunit of the tagatose-1,6-bisphosphate aldolase KbaYZ, which catalyzes the reversible aldol condensation of dihydroxyacetone phosphate (DHAP or glycerone-phosphate) with glyceraldehyde 3-phosphate (G3P) to produce tagatose 1,6-bisphosphate (TBP). Requires KbaZ subunit for full activity and stability. This Enterobacter sp. (strain 638) protein is D-tagatose-1,6-bisphosphate aldolase subunit KbaY.